The chain runs to 380 residues: Cytochrome b (380 aa).

4 consecutive transmembrane segments (helical) span residues 34-54 (FGSLLGICLITQILTGLLLAA), 78-99 (WLIRNLHANGASFFFICIYLHI), 114-134 (WNTGVTLLLTLMATAFVGYVL), and 179-199 (FFALHFLLPFMIAGLTLIHLT). Residues His-84 and His-98 each contribute to the heme b site. Heme b contacts are provided by His-183 and His-197. His-202 provides a ligand contact to a ubiquinone. The next 4 membrane-spanning stretches (helical) occupy residues 227–247 (LKDILGFAIMLLLLTTLALFS), 289–309 (LGGVLALAASVLILFLTPFLH), 321–341 (LSQLLFWLLVANLLILTWVGS), and 348–368 (FIIIGQMASITYFIIILVLFP).

This sequence belongs to the cytochrome b family. In terms of assembly, the cytochrome bc1 complex contains 11 subunits: 3 respiratory subunits (MT-CYB, CYC1 and UQCRFS1), 2 core proteins (UQCRC1 and UQCRC2) and 6 low-molecular weight proteins (UQCRH/QCR6, UQCRB/QCR7, UQCRQ/QCR8, UQCR10/QCR9, UQCR11/QCR10 and a cleavage product of UQCRFS1). This cytochrome bc1 complex then forms a dimer. It depends on heme b as a cofactor.

It localises to the mitochondrion inner membrane. Component of the ubiquinol-cytochrome c reductase complex (complex III or cytochrome b-c1 complex) that is part of the mitochondrial respiratory chain. The b-c1 complex mediates electron transfer from ubiquinol to cytochrome c. Contributes to the generation of a proton gradient across the mitochondrial membrane that is then used for ATP synthesis. In Pharomachrus antisianus (Crested quetzal), this protein is Cytochrome b (MT-CYB).